We begin with the raw amino-acid sequence, 262 residues long: Ribosomal RNA small subunit methyltransferase A (262 aa).

S-adenosyl-L-methionine-binding residues include histidine 16, leucine 18, glycine 43, glutamate 64, aspartate 89, and asparagine 109.

The protein belongs to the class I-like SAM-binding methyltransferase superfamily. rRNA adenine N(6)-methyltransferase family. RsmA subfamily.

It is found in the cytoplasm. It carries out the reaction adenosine(1518)/adenosine(1519) in 16S rRNA + 4 S-adenosyl-L-methionine = N(6)-dimethyladenosine(1518)/N(6)-dimethyladenosine(1519) in 16S rRNA + 4 S-adenosyl-L-homocysteine + 4 H(+). In terms of biological role, specifically dimethylates two adjacent adenosines (A1518 and A1519) in the loop of a conserved hairpin near the 3'-end of 16S rRNA in the 30S particle. May play a critical role in biogenesis of 30S subunits. This is Ribosomal RNA small subunit methyltransferase A from Xanthomonas euvesicatoria pv. vesicatoria (strain 85-10) (Xanthomonas campestris pv. vesicatoria).